The sequence spans 157 residues: 2-C-methyl-D-erythritol 2,4-cyclodiphosphate synthase (157 aa).

Residues D8 and H10 each coordinate a divalent metal cation. 4-CDP-2-C-methyl-D-erythritol 2-phosphate-binding positions include 8–10 and 34–35; these read DVH and HS. H42 is an a divalent metal cation binding site. 4-CDP-2-C-methyl-D-erythritol 2-phosphate is bound by residues 56–58, 61–65, 132–135, F139, and R142; these read DIG, FPDTD, and TTTE.

It belongs to the IspF family. In terms of assembly, homotrimer. A divalent metal cation is required as a cofactor.

It catalyses the reaction 4-CDP-2-C-methyl-D-erythritol 2-phosphate = 2-C-methyl-D-erythritol 2,4-cyclic diphosphate + CMP. It participates in isoprenoid biosynthesis; isopentenyl diphosphate biosynthesis via DXP pathway; isopentenyl diphosphate from 1-deoxy-D-xylulose 5-phosphate: step 4/6. In terms of biological role, involved in the biosynthesis of isopentenyl diphosphate (IPP) and dimethylallyl diphosphate (DMAPP), two major building blocks of isoprenoid compounds. Catalyzes the conversion of 4-diphosphocytidyl-2-C-methyl-D-erythritol 2-phosphate (CDP-ME2P) to 2-C-methyl-D-erythritol 2,4-cyclodiphosphate (ME-CPP) with a corresponding release of cytidine 5-monophosphate (CMP). The sequence is that of 2-C-methyl-D-erythritol 2,4-cyclodiphosphate synthase from Geobacter metallireducens (strain ATCC 53774 / DSM 7210 / GS-15).